The following is a 37-amino-acid chain: Photosystem II reaction center protein L (37 aa).

Over 1-13 (MEPNPNRQPVELN) the chain is Cytoplasmic. Residues 14–35 (RTSLYLGLLLILVLALLFSSYF) traverse the membrane as a helical segment. Residues 36–37 (FN) lie on the Lumenal side of the membrane.

As to quaternary structure, PSII is composed of 1 copy each of membrane proteins PsbA, PsbB, PsbC, PsbD, PsbE, PsbF, PsbH, PsbI, PsbJ, PsbK, PsbL, PsbM, PsbT, PsbX, PsbY, PsbZ, Psb30/Ycf12, peripheral proteins PsbO, CyanoQ (PsbQ), PsbU, PsbV and a large number of cofactors. It forms dimeric complexes. Part of a photosystem II (PSII) assembly intermediate complex PSII-I; crystallized from a strain deleted of psbJ, it forms monomeric PSII before addition of the oxygen evolving complex. PSII-I includes 3 assembly factors not found in mature PSII (Psb27, Psb28 and Psb34). PSII binds multiple chlorophylls, carotenoids and specific lipids. serves as cofactor.

The protein resides in the cellular thylakoid membrane. One of the components of the core complex of photosystem II (PSII). PSII is a light-driven water:plastoquinone oxidoreductase that uses light energy to abstract electrons from H(2)O, generating O(2) and a proton gradient subsequently used for ATP formation. It consists of a core antenna complex that captures photons, and an electron transfer chain that converts photonic excitation into a charge separation. This subunit is found at the monomer-monomer interface and is required for correct PSII assembly and/or dimerization. This subunit may make specific contacts with lipid(s). The polypeptide is Photosystem II reaction center protein L (Thermosynechococcus vestitus (strain NIES-2133 / IAM M-273 / BP-1)).